Reading from the N-terminus, the 122-residue chain is V-type ATPase assembly factor PKR1 (122 aa).

Residues 1–20 (MANFFVRLWESVFEPGTSPQ) lie on the Cytoplasmic side of the membrane. The chain crosses the membrane as a helical span at residues 21–41 (LIIATHVSFVALLLTLIWLIY). Residues 42 to 46 (ATNGN) lie on the Lumenal side of the membrane. A helical transmembrane segment spans residues 47-67 (IHFYALFCISLLLWITVIWFI). Residues 68 to 122 (NELSHVKLKDNDELDKDANKKDDSAIKEDSEDKQESGKSTSTARRTQAQSRSRKA) are Cytoplasmic-facing. Residues 82–103 (DKDANKKDDSAIKEDSEDKQES) show a composition bias toward basic and acidic residues. Positions 82–122 (DKDANKKDDSAIKEDSEDKQESGKSTSTARRTQAQSRSRKA) are disordered. The segment covering 104–122 (GKSTSTARRTQAQSRSRKA) has biased composition (polar residues).

This sequence belongs to the PKR1 family.

The protein resides in the endoplasmic reticulum membrane. Functionally, functions together with the other V-type ATPase assembly factors in the endoplasmic reticulum to efficiently assemble the V-type ATPase membrane sector V(0). The chain is V-type ATPase assembly factor PKR1 (PKR1) from Saccharomyces cerevisiae (strain ATCC 204508 / S288c) (Baker's yeast).